A 540-amino-acid polypeptide reads, in one-letter code: Probable H/ACA ribonucleoprotein complex subunit 4 (540 aa).

Residues 1 to 24 (MTTDKKSKSKSSEKSTQEVEQVIK) are disordered. Asp-109 acts as the Nucleophile in catalysis. Residues 280 to 355 (YKRIVVKDSA…VVATIKRVIM (76 aa)) enclose the PUA domain. Positions 414–540 (SPVESMNVDT…DKKEKKKSKN (127 aa)) are disordered. Residues 448–494 (KKEKKDKKEKKKDSSDDESEEEKSSKKDKKEKKEKKEKKEKKSSKDD) adopt a coiled-coil conformation. Over residues 473 to 489 (KKDKKEKKEKKEKKEKK) the composition is skewed to basic residues. Basic and acidic residues-rich tracts occupy residues 490–503 (SSKD…SKKE) and 513–528 (SDKD…DKKD). A compositionally biased stretch (basic residues) spans 529–540 (KKDKKEKKKSKN).

Belongs to the pseudouridine synthase TruB family. In terms of assembly, component of the small nucleolar ribonucleoprotein particles containing H/ACA-type snoRNAs (H/ACA snoRNPs).

It is found in the nucleus. The protein localises to the nucleolus. It carries out the reaction a uridine in RNA = a pseudouridine in RNA. Plays a central role in ribosomal RNA processing. Probable catalytic subunit of H/ACA small nucleolar ribonucleoprotein (H/ACA snoRNP) complex, which catalyzes pseudouridylation of rRNA. This involves the isomerization of uridine such that the ribose is subsequently attached to C5, instead of the normal N1. Pseudouridine ('psi') residues may serve to stabilize the conformation of rRNAs. The polypeptide is Probable H/ACA ribonucleoprotein complex subunit 4 (nola4) (Dictyostelium discoideum (Social amoeba)).